Here is an 86-residue protein sequence, read N- to C-terminus: Large ribosomal subunit protein bL27 (86 aa).

The segment at 1-26 (MATKKAGGSSRNGRDSAGRRLGIKKS) is disordered.

This sequence belongs to the bacterial ribosomal protein bL27 family.

This Rickettsia typhi (strain ATCC VR-144 / Wilmington) protein is Large ribosomal subunit protein bL27.